A 518-amino-acid chain; its full sequence is MAFWAGGSPSVVDYFPSEDFYRCGYCKNESGSRSNGMWAHSMTVQDYQDLIDRGWRRSGKYVYKPVMNQTCCPQYTIRCRPLQFQPSKSHKKVLKKMLKFLAKGEVPKGSCEDEPMDSTMDDAVAGDFALINKLDIQCDLKTLSDDIKESLESEGKNSKKEEPQELLQSQDFVGEKLGSGEPSHSVKVHTVPKPGKGADLSKPPCRKAKEIRKERKRLKLMQQNPAGELEGFQAQGHPPSLFPPKAKSNQPKSLEDLIFESLPENASHKLEVRVVRSSPPSSQFKATLLESYQVYKRYQMVIHKNPPDTPTESQFTRFLCSSPLEAETPPNGPDCGYGSFHQQYWLDGKIIAVGVIDILPNCVSSVYLYYDPDYSFLSLGVYSALREIAFTRQLHEKTSQLSYYYMGFYIHSCPKMKYKGQYRPSDLLCPETYVWVPIEQCLPSLENSKYCRFNQDPEAVDEDRSTEPDRLQVFHKRAIMPYGVYKKQQKDPSEEAAVLQYASLVGQKCSERMLLFRN.

A Phosphoserine modification is found at Ser-169. A disordered region spans residues 175–203; it reads EKLGSGEPSHSVKVHTVPKPGKGADLSKP.

This sequence belongs to the R-transferase family. Monomer. Interacts with LIAT1; LIAT1 is not a substrate of ATE1, the interaction takes place in the cytoplasm and seems to increase ATE1 arginyltransferase activity.

It localises to the nucleus. The protein localises to the cytoplasm. It carries out the reaction an N-terminal L-alpha-aminoacyl-[protein] + L-arginyl-tRNA(Arg) = an N-terminal L-arginyl-L-aminoacyl-[protein] + tRNA(Arg) + H(+). Involved in the post-translational conjugation of arginine to the N-terminal aspartate or glutamate of a protein. This arginylation is required for degradation of the protein via the ubiquitin pathway. Does not arginylate cysteine residues. This chain is Arginyl-tRNA--protein transferase 1, found in Homo sapiens (Human).